Reading from the N-terminus, the 233-residue chain is Protein Thf1 (233 aa).

A coiled-coil region spans residues 183 to 204 (DKFSKDLELYRSNLDKMTQALA). Residues 212–233 (ADRKKREQRQQQASTPVAPPNE) form a disordered region.

The protein belongs to the THF1 family.

Its function is as follows. May be involved in photosynthetic membrane biogenesis. This Nostoc sp. (strain PCC 7120 / SAG 25.82 / UTEX 2576) protein is Protein Thf1.